Here is a 215-residue protein sequence, read N- to C-terminus: Fanconi anemia core complex-associated protein 24 (215 aa).

The segment at L160–R215 is ruvA domain 2-like.

In terms of assembly, belongs to the multisubunit FA complex composed of FANCA, FANCB, FANCC, FANCE, FANCF, FANCG, FANCL/PHF9, FANCM and FAAP24. Interacts with FANCM.

It localises to the nucleus. Functionally, plays a role in DNA repair through recruitment of the FA core complex to damaged DNA. Regulates FANCD2 monoubiquitination upon DNA damage. Induces chromosomal instability as well as hypersensitivity to DNA cross-linking agents, when repressed. Targets FANCM/FAAP24 complex to the DNA, preferentially to single strand DNA. In Homo sapiens (Human), this protein is Fanconi anemia core complex-associated protein 24.